Here is a 44-residue protein sequence, read N- to C-terminus: Protein PsbN (44 aa).

A helical transmembrane segment spans residues 7–29 (VATVFVSCLVLSITGYSLYIGFG).

This sequence belongs to the PsbN family.

The protein resides in the plastid. It is found in the chloroplast thylakoid membrane. May play a role in photosystem I and II biogenesis. The chain is Protein PsbN from Nephroselmis olivacea (Green alga).